We begin with the raw amino-acid sequence, 223 residues long: N-terminal Xaa-Pro-Lys N-methyltransferase 1 (223 aa).

Residue Met-1 is modified to N-acetylmethionine. The residue at position 2 (Thr-2) is an N-acetylthreonine; in N-terminal Xaa-Pro-Lys N-methyltransferase 1, N-terminally processed. S-adenosyl-L-methionine is bound by residues Gly-69, Arg-74, 91–93, 119–120, and Gln-135; these read DVT and LQ.

This sequence belongs to the methyltransferase superfamily. NTM1 family.

It is found in the nucleus. It carries out the reaction N-terminal L-alanyl-L-prolyl-L-lysyl-[protein] + 3 S-adenosyl-L-methionine = N-terminal N,N,N-trimethyl-L-alanyl-L-prolyl-L-lysyl-[protein] + 3 S-adenosyl-L-homocysteine + 3 H(+). The catalysed reaction is N-terminal L-seryl-L-prolyl-L-lysyl-[protein] + 3 S-adenosyl-L-methionine = N-terminal N,N,N-trimethyl-L-seryl-L-prolyl-L-lysyl-[protein] + 3 S-adenosyl-L-homocysteine + 3 H(+). It catalyses the reaction N-terminal L-prolyl-L-prolyl-L-lysyl-[protein] + 2 S-adenosyl-L-methionine = N-terminal N,N-dimethyl-L-prolyl-L-prolyl-L-lysyl-[protein] + 2 S-adenosyl-L-homocysteine + 2 H(+). Distributive alpha-N-methyltransferase that methylates the N-terminus of target proteins containing the N-terminal motif [Ala/Gly/Pro/Ser]-Pro-Lys when the initiator Met is cleaved. Specifically catalyzes mono-, di- or tri-methylation of the exposed alpha-amino group of the Ala, Gly or Ser residue in the [Ala/Gly/Ser]-Pro-Lys motif and mono- or di-methylation of Pro in the Pro-Pro-Lys motif. Some of the substrates may be primed by NTMT2-mediated monomethylation. Catalyzes the trimethylation of the N-terminal Gly in CENPA (after removal of Met-1). Responsible for the N-terminal methylation of KLHL31, MYL2, MYL3, RB1, RCC1, RPL23A and SET. Required during mitosis for normal bipolar spindle formation and chromosome segregation via its action on RCC1. This is N-terminal Xaa-Pro-Lys N-methyltransferase 1 (Ntmt1) from Rattus norvegicus (Rat).